Consider the following 247-residue polypeptide: Translation initiation factor IF-3 (247 aa).

2 disordered regions span residues 1 to 20 (MIRE…TNRR) and 188 to 247 (LVRQ…PTAS). Residues 182 to 247 (AQKARELVRQ…AAEAQSPTAS (66 aa)) are needed for vegetative and developmental functions, but not for viability. Low complexity predominate over residues 207-217 (AGKSAAGASSG). Positions 218 to 232 (AEEKAEETAEEKKEA) are enriched in basic and acidic residues. Residues 233 to 247 (QAAPAAAEAQSPTAS) show a composition bias toward low complexity.

The protein belongs to the IF-3 family. In terms of assembly, monomer.

It localises to the cytoplasm. Functionally, IF-3 binds to the 30S ribosomal subunit and shifts the equilibrium between 70S ribosomes and their 50S and 30S subunits in favor of the free subunits, thus enhancing the availability of 30S subunits on which protein synthesis initiation begins. The polypeptide is Translation initiation factor IF-3 (Myxococcus xanthus).